The primary structure comprises 216 residues: Octanoyltransferase (216 aa).

The BPL/LPL catalytic domain maps to 32–207 (PDSQDEIWLV…QLVKHLDYAE (176 aa)). Residues 71-78 (RGGQVTYH), 138-140 (SLG), and 151-153 (GLA) contribute to the substrate site. Cys169 acts as the Acyl-thioester intermediate in catalysis.

The protein belongs to the LipB family.

It localises to the cytoplasm. The catalysed reaction is octanoyl-[ACP] + L-lysyl-[protein] = N(6)-octanoyl-L-lysyl-[protein] + holo-[ACP] + H(+). The protein operates within protein modification; protein lipoylation via endogenous pathway; protein N(6)-(lipoyl)lysine from octanoyl-[acyl-carrier-protein]: step 1/2. Catalyzes the transfer of endogenously produced octanoic acid from octanoyl-acyl-carrier-protein onto the lipoyl domains of lipoate-dependent enzymes. Lipoyl-ACP can also act as a substrate although octanoyl-ACP is likely to be the physiological substrate. This chain is Octanoyltransferase, found in Pseudomonas putida (strain ATCC 47054 / DSM 6125 / CFBP 8728 / NCIMB 11950 / KT2440).